The chain runs to 282 residues: MERNVILAKNAGFCFGVKRAVDEAIKYQKEFGKKIYTLGPLIHNNDVVNYLEDNDIFAIELSDTNSLNKGDVVLIRSHGVKESVIKDLTDKGLIVKNATCPYVTNIQLKVKKCYEQGYKIIIVGDENHPEVIGINGWCNDSAIITNGKTELENIPAKVCVVSQTTEKKETWNKVLNEIVKESKEIVAFNTICSATDVRQKSVQELSKEADLVFVIGGKNSSNTTKLYEICKKECPKSYHIENVKELDESLLEDESVKTIGITAGASTPDWIINEVISKIKEL.

C14 is a [4Fe-4S] cluster binding site. The (2E)-4-hydroxy-3-methylbut-2-enyl diphosphate site is built by H43 and H78. Residues H43 and H78 each coordinate dimethylallyl diphosphate. Isopentenyl diphosphate-binding residues include H43 and H78. C100 lines the [4Fe-4S] cluster pocket. H128 contributes to the (2E)-4-hydroxy-3-methylbut-2-enyl diphosphate binding site. Residue H128 coordinates dimethylallyl diphosphate. H128 is a binding site for isopentenyl diphosphate. The Proton donor role is filled by E130. T164 serves as a coordination point for (2E)-4-hydroxy-3-methylbut-2-enyl diphosphate. Residue C192 participates in [4Fe-4S] cluster binding. (2E)-4-hydroxy-3-methylbut-2-enyl diphosphate is bound by residues S220, S221, N222, and S266. Dimethylallyl diphosphate contacts are provided by S220, S221, N222, and S266. 4 residues coordinate isopentenyl diphosphate: S220, S221, N222, and S266.

Belongs to the IspH family. [4Fe-4S] cluster is required as a cofactor.

The catalysed reaction is isopentenyl diphosphate + 2 oxidized [2Fe-2S]-[ferredoxin] + H2O = (2E)-4-hydroxy-3-methylbut-2-enyl diphosphate + 2 reduced [2Fe-2S]-[ferredoxin] + 2 H(+). It carries out the reaction dimethylallyl diphosphate + 2 oxidized [2Fe-2S]-[ferredoxin] + H2O = (2E)-4-hydroxy-3-methylbut-2-enyl diphosphate + 2 reduced [2Fe-2S]-[ferredoxin] + 2 H(+). It participates in isoprenoid biosynthesis; dimethylallyl diphosphate biosynthesis; dimethylallyl diphosphate from (2E)-4-hydroxy-3-methylbutenyl diphosphate: step 1/1. Its pathway is isoprenoid biosynthesis; isopentenyl diphosphate biosynthesis via DXP pathway; isopentenyl diphosphate from 1-deoxy-D-xylulose 5-phosphate: step 6/6. In terms of biological role, catalyzes the conversion of 1-hydroxy-2-methyl-2-(E)-butenyl 4-diphosphate (HMBPP) into a mixture of isopentenyl diphosphate (IPP) and dimethylallyl diphosphate (DMAPP). Acts in the terminal step of the DOXP/MEP pathway for isoprenoid precursor biosynthesis. The sequence is that of 4-hydroxy-3-methylbut-2-enyl diphosphate reductase from Clostridium perfringens (strain SM101 / Type A).